A 332-amino-acid polypeptide reads, in one-letter code: Putative ankyrin repeat protein R896 (332 aa).

5 ANK repeats span residues 159–188 (GNDN…NVKS), 190–218 (DNCA…NVKA), 219–248 (DGNY…DIKA), 249–278 (AQNL…NIST), and 280–308 (NDYV…DIFS).

The protein is Putative ankyrin repeat protein R896 of Acanthamoeba polyphaga mimivirus (APMV).